Here is a 30-residue protein sequence, read N- to C-terminus: Vitri peptide A (30 aa).

The segment at residues 1–30 is a cross-link (cyclopeptide (Gly-Asn)); it reads GIPCGESCVWIPCITSAIGCSCKSKVCYRN. Cystine bridges form between Cys4-Cys20, Cys8-Cys22, and Cys13-Cys27.

Post-translationally, this is a cyclic peptide.

Functionally, probably participates in a plant defense mechanism. Has strong cytotoxic activity against human lymphoma U-937 GTB and human myeloma RPMI-8226/s cell lines. The protein is Vitri peptide A of Viola arvensis (European field pansy).